Here is a 329-residue protein sequence, read N- to C-terminus: Ribonucleoside-diphosphate reductase subunit beta (329 aa).

Residues aspartate 66, glutamate 97, and histidine 101 each contribute to the Fe cation site. Residue tyrosine 105 is part of the active site. Fe cation contacts are provided by glutamate 164, glutamate 198, and histidine 201.

It belongs to the ribonucleoside diphosphate reductase small chain family. Tetramer of two alpha and two beta subunits. Fe cation serves as cofactor.

It catalyses the reaction a 2'-deoxyribonucleoside 5'-diphosphate + [thioredoxin]-disulfide + H2O = a ribonucleoside 5'-diphosphate + [thioredoxin]-dithiol. Provides the precursors necessary for DNA synthesis. Catalyzes the biosynthesis of deoxyribonucleotides from the corresponding ribonucleotides. The protein is Ribonucleoside-diphosphate reductase subunit beta (nrdF) of Bacillus subtilis (strain 168).